The following is a 381-amino-acid chain: EPS I polysaccharide export outer membrane protein EpsA (381 aa).

The N-terminal stretch at 1-23 (MFVSIPNIRKAVVSLSVVPLLAA) is a signal peptide. A lipid anchor (N-palmitoyl cysteine) is attached at cysteine 24. Cysteine 24 carries the S-diacylglycerol cysteine lipid modification.

The protein belongs to the BexD/CtrA/VexA family.

The protein localises to the cell outer membrane. Probably involved in polymerization and/or export of exopolysaccharide EPS I which functions as a virulence factor. The protein is EPS I polysaccharide export outer membrane protein EpsA (epsA) of Ralstonia nicotianae (strain ATCC BAA-1114 / GMI1000) (Ralstonia solanacearum).